We begin with the raw amino-acid sequence, 556 residues long: 2-succinyl-5-enolpyruvyl-6-hydroxy-3-cyclohexene-1-carboxylate synthase (556 aa).

The protein belongs to the TPP enzyme family. MenD subfamily. Homodimer. It depends on Mg(2+) as a cofactor. Mn(2+) serves as cofactor. Thiamine diphosphate is required as a cofactor.

The enzyme catalyses isochorismate + 2-oxoglutarate + H(+) = 5-enolpyruvoyl-6-hydroxy-2-succinyl-cyclohex-3-ene-1-carboxylate + CO2. Its pathway is quinol/quinone metabolism; 1,4-dihydroxy-2-naphthoate biosynthesis; 1,4-dihydroxy-2-naphthoate from chorismate: step 2/7. The protein operates within quinol/quinone metabolism; menaquinone biosynthesis. Its function is as follows. Catalyzes the thiamine diphosphate-dependent decarboxylation of 2-oxoglutarate and the subsequent addition of the resulting succinic semialdehyde-thiamine pyrophosphate anion to isochorismate to yield 2-succinyl-5-enolpyruvyl-6-hydroxy-3-cyclohexene-1-carboxylate (SEPHCHC). This Escherichia coli O8 (strain IAI1) protein is 2-succinyl-5-enolpyruvyl-6-hydroxy-3-cyclohexene-1-carboxylate synthase.